A 144-amino-acid chain; its full sequence is Protein cornichon homolog 1 (144 aa).

Residues 1-10 (MAFTFAAFCY) are Cytoplasmic-facing. Residues 11 to 31 (MLALLLTATLIFFAIWHIIAF) traverse the membrane as a helical segment. Residues 32–56 (DELKTDYKNPIDQCNTLNPLVLPEY) lie on the Lumenal side of the membrane. A helical transmembrane segment spans residues 57–77 (LIHAFFCVMFLCAAEWLTLGL). The Cytoplasmic portion of the chain corresponds to 78 to 122 (NMPLLAYHIWRYMSRPVMSGPGLYDPTTIMNADILAYCQKEGWCK). The chain crosses the membrane as a helical span at residues 123-143 (LAFYLLAFFYYLYGMIYVLVS). A topological domain (lumenal) is located at residue serine 144.

The protein belongs to the cornichon family. Interacts with AREG immature precursor and with immature TGFA, i.e. with a prosegment and lacking full N-glycosylation, but not with the fully N-glycosylated form. In the Golgi apparatus, may form a complex with GORASP55 and transmembrane TGFA.

It localises to the endoplasmic reticulum membrane. It is found in the golgi apparatus membrane. Its function is as follows. Involved in the selective transport and maturation of TGF-alpha family proteins. The protein is Protein cornichon homolog 1 (CNIH1) of Pongo abelii (Sumatran orangutan).